The sequence spans 94 residues: ATP synthase F(0) complex subunit f, mitochondrial (94 aa).

A2 is subject to N-acetylalanine. S3 carries the post-translational modification Phosphoserine. N6-acetyllysine is present on K22. Residues 68–85 (MVLACYVLFSYSFSYKHL) form a helical membrane-spanning segment.

Belongs to the ATPase F chain family. As to quaternary structure, component of the ATP synthase complex composed at least of ATP5F1A/subunit alpha, ATP5F1B/subunit beta, ATP5MC1/subunit c (homooctomer), MT-ATP6/subunit a, MT-ATP8/subunit 8, ATP5ME/subunit e, ATP5MF/subunit f, ATP5MG/subunit g, ATP5MK/subunit k, ATP5MJ/subunit j, ATP5F1C/subunit gamma, ATP5F1D/subunit delta, ATP5F1E/subunit epsilon, ATP5PF/subunit F6, ATP5PB/subunit b, ATP5PD/subunit d, ATP5PO/subunit OSCP. ATP synthase complex consists of a soluble F(1) head domain (subunits alpha(3) and beta(3)) - the catalytic core - and a membrane F(0) domain - the membrane proton channel (subunits c, a, 8, e, f, g, k and j). These two domains are linked by a central stalk (subunits gamma, delta, and epsilon) rotating inside the F1 region and a stationary peripheral stalk (subunits F6, b, d, and OSCP).

Its subcellular location is the mitochondrion. It localises to the mitochondrion inner membrane. Functionally, subunit f, of the mitochondrial membrane ATP synthase complex (F(1)F(0) ATP synthase or Complex V) that produces ATP from ADP in the presence of a proton gradient across the membrane which is generated by electron transport complexes of the respiratory chain. ATP synthase complex consist of a soluble F(1) head domain - the catalytic core - and a membrane F(1) domain - the membrane proton channel. These two domains are linked by a central stalk rotating inside the F(1) region and a stationary peripheral stalk. During catalysis, ATP synthesis in the catalytic domain of F(1) is coupled via a rotary mechanism of the central stalk subunits to proton translocation. In vivo, can only synthesize ATP although its ATP hydrolase activity can be activated artificially in vitro. Part of the complex F(0) domain. The chain is ATP synthase F(0) complex subunit f, mitochondrial from Pongo abelii (Sumatran orangutan).